A 362-amino-acid chain; its full sequence is Probable prephenate dehydrogenase NovF (362 aa).

Residues 2–283 (RTAVIIGTGM…GIDGSNRVPG (282 aa)) form the Prephenate/arogenate dehydrogenase domain.

The protein belongs to the prephenate/arogenate dehydrogenase family.

It catalyses the reaction prephenate + NAD(+) = 3-(4-hydroxyphenyl)pyruvate + CO2 + NADH. It functions in the pathway antibiotic biosynthesis; novobiocin biosynthesis. In terms of biological role, probable prephenate dehydrogenase that produces 4-hydroxyphenylpyruvate (4HPP) in the novobiocin biosynthesis pathway. Novobiocin is an aminocoumarin family antibiotic that targets bacterial DNA gyrases. This chain is Probable prephenate dehydrogenase NovF (novF), found in Streptomyces niveus (Streptomyces spheroides).